A 962-amino-acid chain; its full sequence is SH3 domain-binding protein 4 (962 aa).

The SH3 1 domain maps to 55-114; that stretch reads GNAKEVIAIKDYCPNNFTTLKFSKGDHLYVLDTSGGEWWYAHNTTEMGYIPSSYVQPLNY. A phosphoserine mark is found at S131, S245, S250, S278, and S295. Residues 316–453 enclose the ZU5 domain; that stretch reads TNIVCKLDSS…LEPCMYLAIV (138 aa). S636 bears the Phosphoserine mark. In terms of domain architecture, SH3 2 spans 653–723; it reads SSLKFGKLLK…HTKNVLVVGK (71 aa).

As to quaternary structure, homodimer or homooligomer. Interacts with DNM2, EPS15, clathrin, the adapter protein complex 2/AP-2 and TFRC. Interacts with the Rag GTPases RRAGA, RRAGB, RRAGC and RRAGD; the interaction is most probably direct, preferentially occurs with their inactive GDP-bound form and is negatively regulated by amino acids. Post-translationally, phosphorylated upon EGF stimulation. Phosphorylation prevents interaction with DNM2.

Its subcellular location is the membrane. The protein resides in the clathrin-coated pit. The protein localises to the cytoplasmic vesicle. It is found in the clathrin-coated vesicle. It localises to the nucleus. Functionally, may function in transferrin receptor internalization at the plasma membrane through a cargo-specific control of clathrin-mediated endocytosis. Alternatively, may act as a negative regulator of the amino acid-induced TOR signaling by inhibiting the formation of active Rag GTPase complexes. Preferentially binds inactive Rag GTPase complexes and prevents their interaction with the mTORC1 complex inhibiting its relocalization to lysosomes and its activation. Thereby, may indirectly regulate cell growth, proliferation and autophagy. The polypeptide is SH3 domain-binding protein 4 (Sh3bp4) (Mus musculus (Mouse)).